A 287-amino-acid polypeptide reads, in one-letter code: Bifunctional protein FolD (287 aa).

NADP(+) contacts are provided by residues 160 to 162, S189, and T230; that span reads GRS.

It belongs to the tetrahydrofolate dehydrogenase/cyclohydrolase family. As to quaternary structure, homodimer.

It carries out the reaction (6R)-5,10-methylene-5,6,7,8-tetrahydrofolate + NADP(+) = (6R)-5,10-methenyltetrahydrofolate + NADPH. The catalysed reaction is (6R)-5,10-methenyltetrahydrofolate + H2O = (6R)-10-formyltetrahydrofolate + H(+). Its pathway is one-carbon metabolism; tetrahydrofolate interconversion. Functionally, catalyzes the oxidation of 5,10-methylenetetrahydrofolate to 5,10-methenyltetrahydrofolate and then the hydrolysis of 5,10-methenyltetrahydrofolate to 10-formyltetrahydrofolate. In Chlamydia muridarum (strain MoPn / Nigg), this protein is Bifunctional protein FolD.